The chain runs to 1362 residues: Bromodomain-containing protein 4 (1362 aa).

The disordered stretch occupies residues 1–58; it reads MSAESGPGTRLRNLPVMGDGLETSQMSTTQAQAQPQPANAASTNPPPPETSNPNKPKR. Residues 23-43 show a composition bias toward low complexity; the sequence is TSQMSTTQAQAQPQPANAAST. The Bromo 1 domain maps to 58-164; the sequence is RQTNQLQYLL…KLFLQKINEL (107 aa). Residue K99 forms a Glycyl lysine isopeptide (Lys-Gly) (interchain with G-Cter in SUMO2) linkage. Disordered stretches follow at residues 174–229, 242–352, and 463–615; these read VQAK…PAVT, VPPQ…KVSE, and EPVV…YEEK. Residues 197–211 show a composition bias toward low complexity; that stretch reads PNTTQASTPPQTQTP. 2 stretches are compositionally biased toward pro residues: residues 212 to 227 and 243 to 266; these read QPNP…PFPA and PPQP…PAPQ. A compositionally biased stretch (basic and acidic residues) spans 320–336; the sequence is QRRESSRPVKPPKKDVP. The 110-residue stretch at 348 to 457 folds into the Bromo 2 domain; the sequence is SKVSEQLKCC…DVFEMRFAKM (110 aa). S470 carries the phosphoserine modification. Low complexity predominate over residues 478–497; that stretch reads KVVAPPSSSDSSSDSSSDSD. 7 positions are modified to phosphoserine; by CK2: S484, S488, S492, S494, S498, S499, and S503. Residues 484 to 503 form an NPS region region; that stretch reads SSSDSSSDSSSDSDSSTDDS. The interval 524 to 579 is BID region; the sequence is QLAALSQPQQNKPKKKEKDKKEKKKEKHKRKEEVEENKKSKAKEPPPKKTKKNNSS. Residues 535 to 553 are compositionally biased toward basic residues; sequence KPKKKEKDKKEKKKEKHKR. The span at 554–570 shows a compositional bias: basic and acidic residues; sequence KEEVEENKKSKAKEPPP. K585 is covalently cross-linked (Glycyl lysine isopeptide (Lys-Gly) (interchain with G-Cter in SUMO2)). The region spanning 600–682 is the NET domain; the sequence is ESEEEDKCKP…SCLRKKRKPQ (83 aa). S601 is modified (phosphoserine). Over residues 605 to 615 the composition is skewed to basic and acidic residues; the sequence is DKCKPMSYEEK. Residues K645 and K694 each participate in a glycyl lysine isopeptide (Lys-Gly) (interchain with G-Cter in SUMO2) cross-link. The interval 674 to 1100 is disordered; it reads CLRKKRKPQA…PKKQELRAAS (427 aa). The span at 699–712 shows a compositional bias: low complexity; sequence SSSESESSSESSSS. Over residues 724-744 the composition is skewed to basic residues; that stretch reads KSKKKGHPGREQKKHHHHHHQ. 3 stretches are compositionally biased toward pro residues: residues 751–785, 833–846, and 881–890; these read APVP…PPSM, PELP…PEHS, and PPKPARPPAV. Positions 926–936 are enriched in low complexity; it reads MQMQLYLQQLQ. Composition is skewed to pro residues over residues 953-964, 973-996, and 1010-1034; these read QPPPPLPPPPHP, QPPP…PPRP, and QPPP…PQPA. The segment covering 1041–1050 has biased composition (basic residues); the sequence is QHHHSPRHHK. The interval 1047–1362 is C-terminal (CTD) region; it reads RHHKSDPYST…LLSIFEENLF (316 aa). A Glycyl lysine isopeptide (Lys-Gly) (interchain with G-Cter in SUMO2) cross-link involves residue K1050. Residues 1071 to 1091 show a composition bias toward polar residues; that stretch reads PQMSQFQSLTHQSPPQQNVQP. K1111 is subject to N6-acetyllysine; alternate. K1111 participates in a covalent cross-link: Glycyl lysine isopeptide (Lys-Gly) (interchain with G-Cter in SUMO1); alternate. K1111 participates in a covalent cross-link: Glycyl lysine isopeptide (Lys-Gly) (interchain with G-Cter in SUMO2); alternate. A disordered region spans residues 1116–1339; sequence HSPIIRSEPF…KREQERRRRE (224 aa). S1117 and S1126 each carry phosphoserine. Over residues 1175 to 1196 the composition is skewed to basic and acidic residues; that stretch reads PDKDKQKQEPKTPVAPKKDLKI. K1197 participates in a covalent cross-link: Glycyl lysine isopeptide (Lys-Gly) (interchain with G-Cter in SUMO2). 2 positions are modified to phosphoserine: S1201 and S1204. Residues 1211–1223 are compositionally biased toward low complexity; the sequence is TTPSSTAKSSSDS. Residues 1225–1284 show a composition bias toward basic and acidic residues; that stretch reads EQFRRAAREKEEREKALKAQAEHAEKEKERLRQERMRSREDEDALEQARRAHEEARRRQE. Positions 1285–1313 are enriched in low complexity; the sequence is QQQQQRQEQQQQQQQQAAAVAAAATPQAQ. A compositionally biased stretch (basic and acidic residues) spans 1323–1339; sequence QQRELARKREQERRRRE.

Belongs to the BET family. Interacts with p53/TP53; the interaction is direct. Interacts (via CTD region) with CDK9 and CCNT1, acting as an associated component of P-TEFb complex. Interacts with RELA (when acetylated at 'Lys-310'). Interacts (via NET domain) with NSD3, CHD4, BICRA and ATAD5. The interaction with BICRA bridges BRD4 to the GBAF complex. Interacts (via NET domain) with JMJD6 (via JmjC and N-terminal domains); the interaction is stronger in presence of ssRNA and recruits JMJD6 on distal enhancers. Interacts with NSD3. Interacts with NIPBL. In terms of assembly, interacts with SMC2. Interacts with NCAPD3. As to quaternary structure, (Microbial infection) Interacts with bovine papillomavirus type 1 regulatory protein E2. This interactions may serve for the tethering of viral genomes to host mitotic chromosomes allowing successful partitioning of the viral genome during cell division. (Microbial infection) Interacts with Epstein-Barr virus (EBV) protein EBNA1; this interaction facilitates transcriptional activation by EBNA1. In terms of assembly, (Microbial infection) Interacts with human herpes virus-8 (HHV-8) protein LANA. Post-translationally, phosphorylation by CK2 disrupt the intramolecular binding between the bromo domain 2 and the NPS region and promotes binding between the NPS and the BID regions, leading to activate the protein and promote binding to acetylated histones. In absence of phosphorylation, BRD4 does not localize to p53/TP53 target gene promoters, phosphorylation promoting recruitment to p53/TP53 target promoters. Ubiquitously expressed.

The protein resides in the nucleus. It localises to the chromosome. With respect to regulation, inhibited by JQ1, a thieno-triazolo-1,4-diazepine derivative, which specifically inhibits members of the BET family (BRD2, BRD3 and BRD4). The first bromo domain is inhibited by GSK778 (iBET-BD1), which specifically inhibits the first bromo domain of members of the BET family (BRD2, BRD3 and BRD4). The second bromo domain is inhibited by ABBV-744, which specifically inhibits the second bromo domain of members of the BET family (BRD2, BRD3 and BRD4). The second bromo domain is inhibited by GSK046 (iBET-BD2), which specifically inhibits the second bromo domain of members of the BET family (BRD2, BRD3 and BRD4). In terms of biological role, chromatin reader protein that recognizes and binds acetylated histones and plays a key role in transmission of epigenetic memory across cell divisions and transcription regulation. Remains associated with acetylated chromatin throughout the entire cell cycle and provides epigenetic memory for postmitotic G1 gene transcription by preserving acetylated chromatin status and maintaining high-order chromatin structure. During interphase, plays a key role in regulating the transcription of signal-inducible genes by associating with the P-TEFb complex and recruiting it to promoters. Also recruits P-TEFb complex to distal enhancers, so called anti-pause enhancers in collaboration with JMJD6. BRD4 and JMJD6 are required to form the transcriptionally active P-TEFb complex by displacing negative regulators such as HEXIM1 and 7SKsnRNA complex from P-TEFb, thereby transforming it into an active form that can then phosphorylate the C-terminal domain (CTD) of RNA polymerase II. Regulates differentiation of naive CD4(+) T-cells into T-helper Th17 by promoting recruitment of P-TEFb to promoters. Promotes phosphorylation of 'Ser-2' of the C-terminal domain (CTD) of RNA polymerase II. According to a report, directly acts as an atypical protein kinase and mediates phosphorylation of 'Ser-2' of the C-terminal domain (CTD) of RNA polymerase II; these data however need additional evidences in vivo. In addition to acetylated histones, also recognizes and binds acetylated RELA, leading to further recruitment of the P-TEFb complex and subsequent activation of NF-kappa-B. Also acts as a regulator of p53/TP53-mediated transcription: following phosphorylation by CK2, recruited to p53/TP53 specific target promoters. Acts as a chromatin insulator in the DNA damage response pathway. Inhibits DNA damage response signaling by recruiting the condensin-2 complex to acetylated histones, leading to chromatin structure remodeling, insulating the region from DNA damage response by limiting spreading of histone H2AX/H2A.x phosphorylation. The polypeptide is Bromodomain-containing protein 4 (BRD4) (Homo sapiens (Human)).